Reading from the N-terminus, the 320-residue chain is ATP-dependent 6-phosphofructokinase (320 aa).

ATP is bound at residue G11. Position 21–25 (21–25) interacts with ADP; it reads RAVTK. Residues 72 to 73 and 102 to 105 each bind ATP; these read RF and GDGS. D103 contributes to the Mg(2+) binding site. 125–127 serves as a coordination point for substrate; sequence TID. The active-site Proton acceptor is the D127. ADP is bound at residue R154. Substrate is bound by residues R162 and 169 to 171; that span reads MGR. ADP contacts are provided by residues 185 to 187 and 213 to 215; these read GAD and KDH. Substrate-binding positions include E222, R243, and 249-252; that span reads HMQR.

Belongs to the phosphofructokinase type A (PFKA) family. ATP-dependent PFK group I subfamily. Prokaryotic clade 'B1' sub-subfamily. In terms of assembly, homotetramer. It depends on Mg(2+) as a cofactor.

It localises to the cytoplasm. It catalyses the reaction beta-D-fructose 6-phosphate + ATP = beta-D-fructose 1,6-bisphosphate + ADP + H(+). The protein operates within carbohydrate degradation; glycolysis; D-glyceraldehyde 3-phosphate and glycerone phosphate from D-glucose: step 3/4. Allosterically activated by ADP and other diphosphonucleosides, and allosterically inhibited by phosphoenolpyruvate. In terms of biological role, catalyzes the phosphorylation of D-fructose 6-phosphate to fructose 1,6-bisphosphate by ATP, the first committing step of glycolysis. The polypeptide is ATP-dependent 6-phosphofructokinase (Lactobacillus helveticus (strain DPC 4571)).